Consider the following 276-residue polypeptide: Alpha N-terminal protein methyltransferase 1 (276 aa).

Residues G96, R101, 118 to 120 (EPV), 149 to 150 (LQ), and Q165 each bind S-adenosyl-L-methionine.

This sequence belongs to the methyltransferase superfamily. NTM1 family.

It catalyses the reaction N-terminal L-alanyl-L-prolyl-L-lysyl-[protein] + 3 S-adenosyl-L-methionine = N-terminal N,N,N-trimethyl-L-alanyl-L-prolyl-L-lysyl-[protein] + 3 S-adenosyl-L-homocysteine + 3 H(+). The catalysed reaction is N-terminal L-seryl-L-prolyl-L-lysyl-[protein] + 3 S-adenosyl-L-methionine = N-terminal N,N,N-trimethyl-L-seryl-L-prolyl-L-lysyl-[protein] + 3 S-adenosyl-L-homocysteine + 3 H(+). It carries out the reaction N-terminal L-prolyl-L-prolyl-L-lysyl-[protein] + 2 S-adenosyl-L-methionine = N-terminal N,N-dimethyl-L-prolyl-L-prolyl-L-lysyl-[protein] + 2 S-adenosyl-L-homocysteine + 2 H(+). Functionally, alpha-N-methyltransferase that methylates the N-terminus of target proteins containing the N-terminal motif [Ala/Pro/Ser]-Pro-Lys when the initiator Met is cleaved. Specifically catalyzes mono-, di- or tri-methylation of exposed alpha-amino group of Ala or Ser residue in the [Ala/Ser]-Pro-Lys motif and mono- or di-methylation of Pro in the Pro-Pro-Lys motif. The sequence is that of Alpha N-terminal protein methyltransferase 1 from Arabidopsis thaliana (Mouse-ear cress).